Consider the following 797-residue polypeptide: Xaa-Pro dipeptidyl-peptidase (797 aa).

Catalysis depends on charge relay system residues Ser370, Asp490, and His521.

Belongs to the peptidase S15 family. As to quaternary structure, homodimer.

It is found in the cytoplasm. It catalyses the reaction Hydrolyzes Xaa-Pro-|- bonds to release unblocked, N-terminal dipeptides from substrates including Ala-Pro-|-p-nitroanilide and (sequentially) Tyr-Pro-|-Phe-Pro-|-Gly-Pro-|-Ile.. Functionally, removes N-terminal dipeptides sequentially from polypeptides having unsubstituted N-termini provided that the penultimate residue is proline. This Lacticaseibacillus paracasei (strain ATCC 334 / BCRC 17002 / CCUG 31169 / CIP 107868 / KCTC 3260 / NRRL B-441) (Lactobacillus paracasei) protein is Xaa-Pro dipeptidyl-peptidase.